Consider the following 181-residue polypeptide: Peptidyl-tRNA hydrolase (181 aa).

Position 14 (Y14) interacts with tRNA. The active-site Proton acceptor is H19. The tRNA site is built by Y62, N64, and N108.

Belongs to the PTH family. In terms of assembly, monomer.

The protein localises to the cytoplasm. It catalyses the reaction an N-acyl-L-alpha-aminoacyl-tRNA + H2O = an N-acyl-L-amino acid + a tRNA + H(+). Its function is as follows. Hydrolyzes ribosome-free peptidyl-tRNAs (with 1 or more amino acids incorporated), which drop off the ribosome during protein synthesis, or as a result of ribosome stalling. Functionally, catalyzes the release of premature peptidyl moieties from peptidyl-tRNA molecules trapped in stalled 50S ribosomal subunits, and thus maintains levels of free tRNAs and 50S ribosomes. The polypeptide is Peptidyl-tRNA hydrolase (Campylobacter jejuni subsp. jejuni serotype O:2 (strain ATCC 700819 / NCTC 11168)).